A 288-amino-acid polypeptide reads, in one-letter code: ATP synthase gamma chain (288 aa).

It belongs to the ATPase gamma chain family. As to quaternary structure, F-type ATPases have 2 components, CF(1) - the catalytic core - and CF(0) - the membrane proton channel. CF(1) has five subunits: alpha(3), beta(3), gamma(1), delta(1), epsilon(1). CF(0) has three main subunits: a, b and c.

The protein resides in the cell inner membrane. In terms of biological role, produces ATP from ADP in the presence of a proton gradient across the membrane. The gamma chain is believed to be important in regulating ATPase activity and the flow of protons through the CF(0) complex. The chain is ATP synthase gamma chain from Aliivibrio fischeri (strain ATCC 700601 / ES114) (Vibrio fischeri).